The following is a 341-amino-acid chain: Elongation factor Ts, mitochondrial 2 (341 aa).

The N-terminal 17 residues, 1–17 (MLAARFASRAFPRTRLY), are a transit peptide targeting the mitochondrion.

This sequence belongs to the EF-Ts family.

Its subcellular location is the mitochondrion. Associates with the EF-Tu.GDP complex and induces the exchange of GDP to GTP. It remains bound to the aminoacyl-tRNA.EF-Tu.GTP complex up to the GTP hydrolysis stage on the ribosome. The chain is Elongation factor Ts, mitochondrial 2 from Postia placenta (strain ATCC 44394 / Madison 698-R) (Brown rot fungus).